We begin with the raw amino-acid sequence, 673 residues long: MASSISEQINHLRSTLEQHSYNYYVLDTPSIPDAEYDRLLQQLSALETQHPELITADSPTQKVGGAALSKFEQVAHQVPMLSLDNAFSEDEFIAFNRRIKERLMSTEELTFCCEPKLDGLAVSIIYRDGVLVQAATRGDGLTGENVTQNVKTIRNVPLKLRGSDYPAELEVRGEVFMDNAGFEKFNIEAEKRGEKVFVNPRNAAAGSLRQLDSKITAKRPLMFYAYSTGLVADGSIAEDHYQQLEKLTDWGLPLCPETKLVEGPQAALAYYTDILTRRGELKYEIDGVVIKINQKALQERLGFVARAPRWAIAYKFPAQEEITKLLDVEFQVGRTGAITPVARLEPVFVGGVTVSNATLHNGDEIARLGVKVGDTVIIRRAGDVIPQITQVVLERRPDDARDIEFPVTCPICDSHVEKVEGEAVARCTGGLVCPAQRKQAIKHFASRKALDIDGLGDKIVDQLVDRELIKTPADLFILKQGHFESLERMGPKSAKNLVTALQDAKATTLAKFLYSLGIREAGEATTQNLANHFLTLENVINASIDSLTQVSDVGEIVATHVRSFFAEQHNLDVVNALVEQGINWPELTPPSAQEQPLAGLVYVLTGTLNTLNRNDAKARLQQLGAKVSGSVSAKTDALVAGEKAGSKLTKAQDLGIDVLTEEDLINLLEQHNG.

Residues 33–37, 82–83, and Glu-114 contribute to the NAD(+) site; these read DAEYD and SL. Lys-116 functions as the N6-AMP-lysine intermediate in the catalytic mechanism. NAD(+)-binding residues include Arg-137, Glu-174, Lys-291, and Lys-315. Residues Cys-409, Cys-412, Cys-427, and Cys-433 each coordinate Zn(2+). The 82-residue stretch at 592 to 673 folds into the BRCT domain; sequence AQEQPLAGLV…LINLLEQHNG (82 aa).

It belongs to the NAD-dependent DNA ligase family. LigA subfamily. Requires Mg(2+) as cofactor. The cofactor is Mn(2+).

The enzyme catalyses NAD(+) + (deoxyribonucleotide)n-3'-hydroxyl + 5'-phospho-(deoxyribonucleotide)m = (deoxyribonucleotide)n+m + AMP + beta-nicotinamide D-nucleotide.. Its function is as follows. DNA ligase that catalyzes the formation of phosphodiester linkages between 5'-phosphoryl and 3'-hydroxyl groups in double-stranded DNA using NAD as a coenzyme and as the energy source for the reaction. It is essential for DNA replication and repair of damaged DNA. The protein is DNA ligase of Pseudoalteromonas translucida (strain TAC 125).